The sequence spans 142 residues: Large ribosomal subunit protein uL11 (142 aa).

It belongs to the universal ribosomal protein uL11 family. Part of the ribosomal stalk of the 50S ribosomal subunit. Interacts with L10 and the large rRNA to form the base of the stalk. L10 forms an elongated spine to which L12 dimers bind in a sequential fashion forming a multimeric L10(L12)X complex. In terms of processing, one or more lysine residues are methylated.

In terms of biological role, forms part of the ribosomal stalk which helps the ribosome interact with GTP-bound translation factors. The protein is Large ribosomal subunit protein uL11 of Mesorhizobium japonicum (strain LMG 29417 / CECT 9101 / MAFF 303099) (Mesorhizobium loti (strain MAFF 303099)).